Here is a 1515-residue protein sequence, read N- to C-terminus: Lysophospholipase nte1 (1515 aa).

Residues 1–59 lie on the Cytoplasmic side of the membrane; it reads MESLSNLGNAMSSVLSETTSTTATAILADPTEALSSVVALASDAVSKATSDVVPEHTPT. The chain crosses the membrane as a helical span at residues 60–80; that stretch reads SWFTIILWLLHRISSVLYFVI. Over 81–102 the chain is Lumenal; it reads KLTTITTPTFLFNIFSTSLTVT. A helical transmembrane segment spans residues 103-123; it reads MNATTLVLIMLFMMAGVTWVV. Over 124–1515 the chain is Cytoplasmic; it reads RYRYLNMYSR…RTMAPRRASI (1392 aa). Disordered stretches follow at residues 278 to 303, 519 to 580, and 617 to 639; these read MHDTDDDDSPDPTPSAPGTAMPGYPM, VTAT…TPRN, and VNPDSTQASPRFVPTDQRRSRGG. Composition is skewed to polar residues over residues 543–554 and 566–579; these read LTNTQQLKSGPA and PRPQRNLSPFSTPR. A nucleoside 3',5'-cyclic phosphate-binding positions include 670–789 and 835–955; these read SPVP…LAGY and RLTE…IAAR. The 165-residue stretch at 1212-1376 folds into the PNPLA domain; the sequence is LVLGGGGARG…IDNLTVSRMK (165 aa). The GXGXXG signature appears at 1216–1221; sequence GGGARG. Residues 1243–1247 carry the GXSXG motif; that stretch reads GTSIG. Ser-1245 (nucleophile) is an active-site residue. Asp-1363 (proton acceptor) is an active-site residue. Residues 1363-1365 carry the DGA/G motif; it reads DGG.

Belongs to the NTE family.

It localises to the endoplasmic reticulum membrane. The enzyme catalyses a 1-acyl-sn-glycero-3-phosphocholine + H2O = sn-glycerol 3-phosphocholine + a fatty acid + H(+). Inhibited by organophosphorus esters. Intracellular phospholipase B that catalyzes the double deacylation of phosphatidylcholine (PC) to glycerophosphocholine (GroPCho). Plays an important role in membrane lipid homeostasis. Responsible for the rapid PC turnover in response to inositol, elevated temperatures, or when choline is present in the growth medium. The polypeptide is Lysophospholipase nte1 (nte1) (Neurospora crassa (strain ATCC 24698 / 74-OR23-1A / CBS 708.71 / DSM 1257 / FGSC 987)).